Consider the following 267-residue polypeptide: Nus factor SuhB (267 aa).

Mg(2+)-binding residues include Glu67, Asp84, and Leu86. Position 67 (Glu67) interacts with substrate. Substrate-binding positions include 86-89 (LDGT), Arg183, and Asp212.

Belongs to the inositol monophosphatase superfamily. Homodimer. The rRNA transcription and antitermination complex (rrnTAC) consists of RNA polymerase (RNAP), NusA, NusB, NusE (rpsJ), NusG, SubB, ribosomal protein S4, DNA and precursor rRNA; S4 is more flexible than other subunits. The cofactor is Mg(2+).

Its subcellular location is the cytoplasm. The catalysed reaction is a myo-inositol phosphate + H2O = myo-inositol + phosphate. Part of the processive rRNA transcription and antitermination complex (rrnTAC). The complex forms an RNA-chaperone ring around the RNA exit tunnel of RNA polymerase (RNAP). It supports rapid transcription and antitermination of rRNA operons, cotranscriptional rRNA folding, and annealing of distal rRNA regions to allow correct ribosome biogenesis. This subunit may play a central role in organizing the structure. This Vibrio cholerae serotype O1 (strain ATCC 39315 / El Tor Inaba N16961) protein is Nus factor SuhB.